The sequence spans 239 residues: Guanylate kinase (239 aa).

The Guanylate kinase-like domain maps to 55 to 235 (GRIFVITGPS…TLAELQAILL (181 aa)). 62 to 69 (GPSGVGKS) lines the ATP pocket.

The protein belongs to the guanylate kinase family.

It is found in the cytoplasm. The enzyme catalyses GMP + ATP = GDP + ADP. In terms of biological role, essential for recycling GMP and indirectly, cGMP. This chain is Guanylate kinase (gmk), found in Mycoplasma pneumoniae (strain ATCC 29342 / M129 / Subtype 1) (Mycoplasmoides pneumoniae).